Here is a 576-residue protein sequence, read N- to C-terminus: MRMNKFYMPTLREDPQDAEIASHKLLLRAGMIRKTAAGLYSYLPLGYRIVRKVENIVREEMDNYGSQEIHMPITQPREIWEESGRWKTFGPEMFKLKDRNNREFCLGPTAEEYFTDLVKGEIKSYKQLPLNIYQIQTKYRDEKRPRFGINRSREFLMQDAYTFDVNEEAMGEAYMNMWRAYEVVFNRLGLEYKIVAGDSGAMGGNSSHEFIALSDVGEGVICYSDDSDFAATDEKAYVYYQVNDENVEKLSSEKVLTPNCKTIEEVSDFLNVDAAHCLKAVDLMVEGKPVIVFIPGDRELNMSKLVSYLKCPEHEIEMMEEQDILALNSSPGFTGPIGLDCRIIIDSRVKQMKNFVVGANEENYHIKNVNYGDDFEGEIVEDLLMVQEGDIDPETKSPLKFKRGIEVGNIFQLGQKYSKSMNATFLDENGKEQFFWMGSYGIGVTRSVSAIVEQNHDDKGMIWPLVVAPYHVIITIVNTKDEEQNTLAEKLYEKLLLQGVEVLLDDRKERVGVKFNDRDLIGIPLRITVGKKAAEDIVEFSERRTLENVEMSSTEAYEKVMEIINSNLKSVGGLYR.

Belongs to the class-II aminoacyl-tRNA synthetase family. ProS type 1 subfamily. In terms of assembly, homodimer.

Its subcellular location is the cytoplasm. It catalyses the reaction tRNA(Pro) + L-proline + ATP = L-prolyl-tRNA(Pro) + AMP + diphosphate. Catalyzes the attachment of proline to tRNA(Pro) in a two-step reaction: proline is first activated by ATP to form Pro-AMP and then transferred to the acceptor end of tRNA(Pro). As ProRS can inadvertently accommodate and process non-cognate amino acids such as alanine and cysteine, to avoid such errors it has two additional distinct editing activities against alanine. One activity is designated as 'pretransfer' editing and involves the tRNA(Pro)-independent hydrolysis of activated Ala-AMP. The other activity is designated 'posttransfer' editing and involves deacylation of mischarged Ala-tRNA(Pro). The misacylated Cys-tRNA(Pro) is not edited by ProRS. In Finegoldia magna (strain ATCC 29328 / DSM 20472 / WAL 2508) (Peptostreptococcus magnus), this protein is Proline--tRNA ligase.